A 237-amino-acid chain; its full sequence is Lipid A 1-diphosphate synthase (237 aa).

Topologically, residues 1–5 (MIKNL) are cytoplasmic. The chain crosses the membrane as a helical span at residues 6-26 (PQIVLLNIVGLALFLSWYIPV). The Periplasmic portion of the chain corresponds to 27-62 (NHGFWLPIDADIFYFFNQKLVESKAFLWLVALTNNR). Residues 63–83 (AFDGCSLLAMGMLMLSFWLKE) form a helical membrane-spanning segment. Over 84–90 (NAPGRRR) the chain is Cytoplasmic. Residues 91 to 111 (IVIIGLVMLLTAVVLNQLGQA) traverse the membrane as a helical segment. At 112 to 145 (LIPVKRASPTLTFTDINRVSELLSVPTKDASRDS) the chain is on the periplasmic side. A topological domain (cytoplasmic) is located at residue Lys-167. A helical membrane pass occupies residues 168 to 188 (VAGLIALIIFVVFAFPRVMIG). At 189 to 194 (AHWFTD) the chain is on the periplasmic side. Residues 195-215 (IIVGSMTVILIGLPWVLLTPL) form a helical membrane-spanning segment. Residues 216–237 (SDRLITFFDKSLPGKNKHFQNK) are Cytoplasmic-facing.

Belongs to the LpxT phosphotransferase family.

It localises to the cell inner membrane. It catalyses the reaction di-trans,octa-cis-undecaprenyl diphosphate + alpha-Kdo-(2-&gt;4)-alpha-Kdo-(2-&gt;6)-lipid A (E. coli) = (Kdo)2-lipid A 1-diphosphate + di-trans,octa-cis-undecaprenyl phosphate. Its pathway is bacterial outer membrane biogenesis; lipopolysaccharide biosynthesis. Its activity is regulated as follows. Inhibited by BasR. This regulation does not occur at the level of transcription, but rather following the assembly of LpxT into the inner membrane. Involved in the modification of the lipid A domain of lipopolysaccharides (LPS). Transfers a phosphate group from undecaprenyl pyrophosphate (C55-PP) to lipid A to form lipid A 1-diphosphate. Contributes to the recycling of undecaprenyl phosphate (C55-P). In vitro, has low undecaprenyl-diphosphate phosphatase activity. The chain is Lipid A 1-diphosphate synthase from Escherichia coli (strain K12).